A 201-amino-acid chain; its full sequence is Peptide deformylase (201 aa).

The segment at 1-34 (MSLNFAAMARQSERQASTVMVPKGEEQPESPKIH) is disordered. Residues 23–32 (KGEEQPESPK) show a composition bias toward basic and acidic residues. Residues Cys121 and His163 each contribute to the Fe cation site. The active site involves Glu164. Residue His167 coordinates Fe cation.

It belongs to the polypeptide deformylase family. It depends on Fe(2+) as a cofactor.

The catalysed reaction is N-terminal N-formyl-L-methionyl-[peptide] + H2O = N-terminal L-methionyl-[peptide] + formate. In terms of biological role, removes the formyl group from the N-terminal Met of newly synthesized proteins. Requires at least a dipeptide for an efficient rate of reaction. N-terminal L-methionine is a prerequisite for activity but the enzyme has broad specificity at other positions. This is Peptide deformylase from Synechococcus sp. (strain RCC307).